The primary structure comprises 133 residues: Large ribosomal subunit protein uL14 (133 aa).

Belongs to the universal ribosomal protein uL14 family. Part of the 50S ribosomal subunit. Forms a cluster with proteins L3 and L24e, part of which may contact the 16S rRNA in 2 intersubunit bridges.

In terms of biological role, binds to 23S rRNA. Forms part of two intersubunit bridges in the 70S ribosome. The sequence is that of Large ribosomal subunit protein uL14 from Methanopyrus kandleri (strain AV19 / DSM 6324 / JCM 9639 / NBRC 100938).